Reading from the N-terminus, the 1855-residue chain is Unconventional myosin-Va (1855 aa).

A2 carries the post-translational modification N-acetylalanine. The 53-residue stretch at 8 to 60 folds into the Myosin N-terminal SH3-like domain; that stretch reads TKFARVWIPDPEEVWKSAELLKDYKPGDKVLLLHLEEGKDLEYHLDPKTKELP. Residues 69–763 form the Myosin motor domain; the sequence is VGENDLTALS…QVAYLEKLRA (695 aa). Position 163 to 170 (163 to 170) interacts with ATP; sequence GESGAGKT. The disordered stretch occupies residues 598 to 631; that stretch reads AISPTSATSSGRTPLTRTPAKPTKGRPGQMAKEH. Position 600 is a phosphoserine (S600). Residues 600-613 show a composition bias toward polar residues; sequence SPTSATSSGRTPLT. The segment at 643-665 is actin-binding; that stretch reads LHLLMETLNATTPHYVRCIKPND. 6 consecutive IQ domains span residues 766–788, 789–818, 814–836, 837–861, 862–883, and 885–914; these read LRAA…KYLR, MRKA…TKAA, RTKA…RYKI, RRAA…RKIL, REHK…THYK, and SMHA…EARS. Coiled-coil stretches lie at residues 914-1237 and 1338-1445; these read SVER…APEV and VYEG…ELEV. T1032 is subject to Phosphothreonine. A phosphoserine mark is found at S1452 and S1652. The Dilute domain maps to 1534–1810; the sequence is TSTINSIKKV…IRTIQMRLRD (277 aa). T1760 bears the Phosphothreonine mark.

This sequence belongs to the TRAFAC class myosin-kinesin ATPase superfamily. Myosin family. In terms of assembly, may be a homodimer, which associates with multiple calmodulin or myosin light chains. Interacts with RIPL2, the interaction is required for its role in dendrite formation. Interacts with MLPH. Interacts with SYTL4. Interacts with MYRIP. Interacts with RAB10; mediates the transport to the plasma membrane of SLC2A4/GLUT4 storage vesicles. Interacts with FMR1; this interaction occurs in association with polyribosome. In terms of tissue distribution, detected in melanocytes.

It carries out the reaction ATP + H2O = ADP + phosphate + H(+). In terms of biological role, processive actin-based motor that can move in large steps approximating the 36-nm pseudo-repeat of the actin filament. Can hydrolyze ATP in the presence of actin, which is essential for its function as a motor protein. Involved in melanosome transport. Also mediates the transport of vesicles to the plasma membrane. May also be required for some polarization process involved in dendrite formation. The polypeptide is Unconventional myosin-Va (MYO5A) (Homo sapiens (Human)).